The sequence spans 238 residues: Ribonuclease PH (238 aa).

Phosphate-binding positions include arginine 86 and 124-126 (GTR).

Belongs to the RNase PH family. As to quaternary structure, homohexameric ring arranged as a trimer of dimers.

It catalyses the reaction tRNA(n+1) + phosphate = tRNA(n) + a ribonucleoside 5'-diphosphate. In terms of biological role, phosphorolytic 3'-5' exoribonuclease that plays an important role in tRNA 3'-end maturation. Removes nucleotide residues following the 3'-CCA terminus of tRNAs; can also add nucleotides to the ends of RNA molecules by using nucleoside diphosphates as substrates, but this may not be physiologically important. Probably plays a role in initiation of 16S rRNA degradation (leading to ribosome degradation) during starvation. In Salmonella agona (strain SL483), this protein is Ribonuclease PH.